Reading from the N-terminus, the 413-residue chain is Arginine biosynthesis bifunctional protein ArgJ, mitochondrial (413 aa).

Positions 168, 194, 205, and 292 each coordinate substrate. The Nucleophile role is filled by Thr-205.

Belongs to the ArgJ family. As to quaternary structure, heterodimer of an alpha and a beta chain. In terms of processing, the alpha and beta chains are autoproteolytically processed from a single precursor protein within the mitochondrion.

It is found in the mitochondrion matrix. It catalyses the reaction N(2)-acetyl-L-ornithine + L-glutamate = N-acetyl-L-glutamate + L-ornithine. It carries out the reaction L-glutamate + acetyl-CoA = N-acetyl-L-glutamate + CoA + H(+). The protein operates within amino-acid biosynthesis; L-arginine biosynthesis; L-ornithine and N-acetyl-L-glutamate from L-glutamate and N(2)-acetyl-L-ornithine (cyclic): step 1/1. It functions in the pathway amino-acid biosynthesis; L-arginine biosynthesis; N(2)-acetyl-L-ornithine from L-glutamate: step 1/4. Catalyzes two activities which are involved in the cyclic version of arginine biosynthesis: the synthesis of acetylglutamate from glutamate and acetyl-CoA, and of ornithine by transacetylation between acetylornithine and glutamate. This chain is Arginine biosynthesis bifunctional protein ArgJ, mitochondrial, found in Clavispora lusitaniae (strain ATCC 42720) (Yeast).